A 503-amino-acid chain; its full sequence is ATP-dependent RNA helicase dbp3 (503 aa).

The segment covering 1-25 has biased composition (basic and acidic residues); sequence MAKRVQHEGGDYRPQKRSKNERNGE. The interval 1–35 is disordered; it reads MAKRVQHEGGDYRPQKRSKNERNGEGSKVSPSAEA. Positions 104–112 match the Q motif motif; that stretch reads SFSSPTPIQ. Residues 116-292 form the Helicase ATP-binding domain; that stretch reads WPLLFAGRDV…ATFMTSAVTV (177 aa). 129 to 136 is an ATP binding site; it reads AETGSGKT. Positions 239 to 242 match the DEAD box motif; it reads DEAD. The 166-residue stretch at 307–472 folds into the Helicase C-terminal domain; that stretch reads RIKQVVEVVK…DVPDALLKFG (166 aa).

Belongs to the DEAD box helicase family. DDX5/DBP2 subfamily.

Its subcellular location is the nucleus. It is found in the nucleolus. It catalyses the reaction ATP + H2O = ADP + phosphate + H(+). In terms of biological role, ATP-dependent RNA helicase required for 60S ribosomal subunit synthesis. Involved in efficient pre-rRNA processing, predominantly at site A3, which is necessary for the normal formation of 25S and 5.8S rRNAs. The chain is ATP-dependent RNA helicase dbp3 (dbp3) from Neosartorya fischeri (strain ATCC 1020 / DSM 3700 / CBS 544.65 / FGSC A1164 / JCM 1740 / NRRL 181 / WB 181) (Aspergillus fischerianus).